The following is a 101-amino-acid chain: Large ribosomal subunit protein uL24 (101 aa).

Belongs to the universal ribosomal protein uL24 family. In terms of assembly, part of the 50S ribosomal subunit.

Functionally, one of two assembly initiator proteins, it binds directly to the 5'-end of the 23S rRNA, where it nucleates assembly of the 50S subunit. Its function is as follows. One of the proteins that surrounds the polypeptide exit tunnel on the outside of the subunit. The sequence is that of Large ribosomal subunit protein uL24 from Streptococcus thermophilus (strain CNRZ 1066).